Reading from the N-terminus, the 134-residue chain is Small ribosomal subunit protein bS6 (134 aa).

Positions 103 to 134 (AAPVKSAEEGTEEVAAEAATEAPAETTTTVEG) are disordered. The segment covering 118–134 (AEAATEAPAETTTTVEG) has biased composition (low complexity).

The protein belongs to the bacterial ribosomal protein bS6 family.

Functionally, binds together with bS18 to 16S ribosomal RNA. This Citrifermentans bemidjiense (strain ATCC BAA-1014 / DSM 16622 / JCM 12645 / Bem) (Geobacter bemidjiensis) protein is Small ribosomal subunit protein bS6.